The following is a 473-amino-acid chain: Dihydrolipoyl dehydrogenase (473 aa).

FAD-binding positions include 36–45 (ERYDKLGGVC), K54, and A117. C45 and C50 are oxidised to a cystine. NAD(+) contacts are provided by residues 182–186 (GSGII), D205, and 270–273 (AIGR). The FAD site is built by D313 and A321. Residue H445 is the Proton acceptor of the active site.

Belongs to the class-I pyridine nucleotide-disulfide oxidoreductase family. Homodimer. It depends on FAD as a cofactor.

Its subcellular location is the cytoplasm. The catalysed reaction is N(6)-[(R)-dihydrolipoyl]-L-lysyl-[protein] + NAD(+) = N(6)-[(R)-lipoyl]-L-lysyl-[protein] + NADH + H(+). Functionally, lipoamide dehydrogenase is a component of the alpha-ketoacid dehydrogenase complexes. The chain is Dihydrolipoyl dehydrogenase (lpdA) from Buchnera aphidicola subsp. Acyrthosiphon pisum (strain APS) (Acyrthosiphon pisum symbiotic bacterium).